The primary structure comprises 354 residues: Holliday junction branch migration complex subunit RuvB (354 aa).

The segment at 4–190 (TDKLAAERII…FGIVARLEFY (187 aa)) is large ATPase domain (RuvB-L). Residues leucine 29, arginine 30, glycine 71, lysine 74, threonine 75, threonine 76, 137-139 (EDY), arginine 180, tyrosine 190, and arginine 227 contribute to the ATP site. Threonine 75 contributes to the Mg(2+) binding site. A small ATPAse domain (RuvB-S) region spans residues 191–261 (DADQLARIVR…VADAALAMLD (71 aa)). The interval 264–354 (PVGFDLMDRK…RGMWDTPAGK (91 aa)) is head domain (RuvB-H). Residues arginine 300, arginine 319, and arginine 324 each coordinate DNA.

It belongs to the RuvB family. In terms of assembly, homohexamer. Forms an RuvA(8)-RuvB(12)-Holliday junction (HJ) complex. HJ DNA is sandwiched between 2 RuvA tetramers; dsDNA enters through RuvA and exits via RuvB. An RuvB hexamer assembles on each DNA strand where it exits the tetramer. Each RuvB hexamer is contacted by two RuvA subunits (via domain III) on 2 adjacent RuvB subunits; this complex drives branch migration. In the full resolvosome a probable DNA-RuvA(4)-RuvB(12)-RuvC(2) complex forms which resolves the HJ.

The protein resides in the cytoplasm. The enzyme catalyses ATP + H2O = ADP + phosphate + H(+). Its function is as follows. The RuvA-RuvB-RuvC complex processes Holliday junction (HJ) DNA during genetic recombination and DNA repair, while the RuvA-RuvB complex plays an important role in the rescue of blocked DNA replication forks via replication fork reversal (RFR). RuvA specifically binds to HJ cruciform DNA, conferring on it an open structure. The RuvB hexamer acts as an ATP-dependent pump, pulling dsDNA into and through the RuvAB complex. RuvB forms 2 homohexamers on either side of HJ DNA bound by 1 or 2 RuvA tetramers; 4 subunits per hexamer contact DNA at a time. Coordinated motions by a converter formed by DNA-disengaged RuvB subunits stimulates ATP hydrolysis and nucleotide exchange. Immobilization of the converter enables RuvB to convert the ATP-contained energy into a lever motion, pulling 2 nucleotides of DNA out of the RuvA tetramer per ATP hydrolyzed, thus driving DNA branch migration. The RuvB motors rotate together with the DNA substrate, which together with the progressing nucleotide cycle form the mechanistic basis for DNA recombination by continuous HJ branch migration. Branch migration allows RuvC to scan DNA until it finds its consensus sequence, where it cleaves and resolves cruciform DNA. In Burkholderia ambifaria (strain MC40-6), this protein is Holliday junction branch migration complex subunit RuvB.